A 78-amino-acid polypeptide reads, in one-letter code: MSRRCDLTGKKANNAFAVSHSHRRTKRLQQANLQSKRVWWPSGNRWVKLKLSTKAIKTLEVKGLEAMAKEAGINLNHY.

It belongs to the bacterial ribosomal protein bL28 family.

This is Large ribosomal subunit protein bL28 from Trichormus variabilis (strain ATCC 29413 / PCC 7937) (Anabaena variabilis).